The chain runs to 608 residues: ABC transporter ATP-binding protein RamB (608 aa).

Transmembrane regions (helical) follow at residues 25 to 45 (GVLV…FLVG), 66 to 86 (LWLG…RGVF), 141 to 161 (GLVL…LGLL), 166 to 186 (ALLV…LVTL), and 253 to 273 (AALG…VEWL). Positions 30–296 (LALWSLAESG…FTYLVQSLLP (267 aa)) constitute an ABC transmembrane type-1 domain. Positions 321-362 (GPEPEPEPEPEPEPEPELGSGLEPEPEPASEPESGPSTASAS) are disordered. Over residues 324-336 (PEPEPEPEPEPEP) the composition is skewed to acidic residues. Low complexity predominate over residues 351–362 (EPESGPSTASAS). In terms of domain architecture, ABC transporter spans 376 to 605 (VELRSVTLSY…SPLYRDLTGH (230 aa)). An ATP-binding site is contributed by 410–417 (GPSGIGKS).

Belongs to the ABC transporter superfamily.

It localises to the cell membrane. Its function is as follows. Probably involved in exporting SapB from the cell. Expression of the ram locus (ramA, ramB and ramR) induces rapid aerial mycelium formation in S.lividans. The chain is ABC transporter ATP-binding protein RamB from Streptomyces coelicolor (strain ATCC BAA-471 / A3(2) / M145).